The primary structure comprises 146 residues: Large ribosomal subunit protein uL13 (146 aa).

This sequence belongs to the universal ribosomal protein uL13 family. As to quaternary structure, part of the 50S ribosomal subunit.

Its function is as follows. This protein is one of the early assembly proteins of the 50S ribosomal subunit, although it is not seen to bind rRNA by itself. It is important during the early stages of 50S assembly. This is Large ribosomal subunit protein uL13 from Bdellovibrio bacteriovorus (strain ATCC 15356 / DSM 50701 / NCIMB 9529 / HD100).